The following is a 365-amino-acid chain: Aspartate-semialdehyde dehydrogenase (365 aa).

Thr15, Gly16, Thr17, Val18, Ser40, Ser43, Leu89, and Asp90 together coordinate NADP(+). Cys156 serves as the catalytic Acyl-thioester intermediate. Gly188 is an NADP(+) binding site. His255 (proton acceptor) is an active-site residue. Asn342 contacts NADP(+).

The protein belongs to the aspartate-semialdehyde dehydrogenase family. Homotetramer; dimer of dimers.

The protein localises to the cytoplasm. The protein resides in the cytosol. It localises to the nucleus. The catalysed reaction is L-aspartate 4-semialdehyde + phosphate + NADP(+) = 4-phospho-L-aspartate + NADPH + H(+). It participates in amino-acid biosynthesis; L-methionine biosynthesis via de novo pathway; L-homoserine from L-aspartate: step 2/3. The protein operates within amino-acid biosynthesis; L-threonine biosynthesis; L-threonine from L-aspartate: step 2/5. With respect to regulation, inhibited by the competitive inhibitor 1,4-benzoquinone and derivates such as 2-chloro-3-methoxy-1,4-naphthoquinone, 2,3-dichloro-1,4-naphthoquinone, 2-chloro-1,4-naphthoquinone, 2-bromo-1,4-naphthoquinone and 2,3-dichloro-5,8-dihydroxy-1,4-naphthoquinone. Catalyzes the NADPH-dependent formation of L-aspartate 4-semialdehyde (L-ASA) by the reductive dephosphorylation of 4-phospho-L-aspartate. Mediates the second step in the biosynthesis of amino acids that derive from aspartate (the aspartate family of amino acids), including methioinine and threonine, the latter of which is a precursor to isoleucine. The chain is Aspartate-semialdehyde dehydrogenase from Cryptococcus neoformans var. neoformans serotype D (strain JEC21 / ATCC MYA-565) (Filobasidiella neoformans).